Reading from the N-terminus, the 298-residue chain is Putative GATA zinc finger domain-containing protein 25 (298 aa).

The stretch at 4–37 (DNKNKNDNYQESIQRIVNQRNNLLKEIENKINQQ) forms a coiled coil. The disordered stretch occupies residues 148-227 (QQQLQQSHTK…RGRPSKPKPE (80 aa)). Positions 183–202 (EENEENEENEENEENEENEE) are enriched in acidic residues. The span at 203-212 (NKEKDVEVAK) shows a compositional bias: basic and acidic residues. The span at 214–223 (NKPKRGRPSK) shows a compositional bias: basic residues. The segment at 229-256 (CFRYGTRSCPYWRKNVIKGELVDVCNAC) adopts a GATA-type; degenerate zinc-finger fold.

This Dictyostelium discoideum (Social amoeba) protein is Putative GATA zinc finger domain-containing protein 25 (gtaY).